Reading from the N-terminus, the 473-residue chain is Serine palmitoyltransferase 1 (473 aa).

Residues methionine 1–glutamine 15 lie on the Lumenal side of the membrane. Residues methionine 1–proline 66 form an interaction with SPTLC2 region. The chain crosses the membrane as a helical span at residues alanine 16–isoleucine 36. The Cytoplasmic portion of the chain corresponds to arginine 37–leucine 473. Position 164 is a phosphotyrosine; by ABL (tyrosine 164).

Belongs to the class-II pyridoxal-phosphate-dependent aminotransferase family. Component of the serine palmitoyltransferase (SPT) complex, which is also composed of SPTLC2 or SPTLC3 and SPTSSA or SPTSSB. The heterodimer with SPTLC2 or SPTLC3 forms the catalytic core of the enzyme, while SPTSSA or SPTSSB subunits determine substrate specificity. SPT also interacts with ORMDL proteins, especially ORMDL3, which negatively regulate SPT activity in the presence of ceramides. Forms dimers of heterodimers with SPTLC2. Interacts with RTN4 (isoform B). Pyridoxal 5'-phosphate serves as cofactor. Phosphorylation at Tyr-164 inhibits activity and promotes cell survival. In terms of tissue distribution, expressed in a variety of tissues. Highest expression in brain, kidney and liver. Expressed in brown and white adipose tissues.

The protein resides in the endoplasmic reticulum membrane. The enzyme catalyses L-serine + hexadecanoyl-CoA + H(+) = 3-oxosphinganine + CO2 + CoA. The catalysed reaction is octadecanoyl-CoA + L-serine + H(+) = 3-oxoeicosasphinganine + CO2 + CoA. It carries out the reaction tetradecanoyl-CoA + L-serine + H(+) = 3-oxohexadecasphinganine + CO2 + CoA. It catalyses the reaction dodecanoyl-CoA + L-serine + H(+) = 3-oxotetradecasphinganine + CO2 + CoA. It participates in lipid metabolism; sphingolipid metabolism. Its activity is regulated as follows. SPT complex catalytic activity is negatively regulated by ORMDL proteins, including ORMDL3, in the presence of ceramides. This mechanism allows to maintain ceramide levels at sufficient concentrations for the production of complex sphingolipids, but which prevents the accumulation of ceramides to levels that trigger apoptosis. Component of the serine palmitoyltransferase multisubunit enzyme (SPT) that catalyzes the initial and rate-limiting step in sphingolipid biosynthesis by condensing L-serine and activated acyl-CoA (most commonly palmitoyl-CoA) to form long-chain bases. The SPT complex is also composed of SPTLC2 or SPTLC3 and SPTSSA or SPTSSB. Within this complex, the heterodimer with SPTLC2 or SPTLC3 forms the catalytic core. The composition of the serine palmitoyltransferase (SPT) complex determines the substrate preference. The SPTLC1-SPTLC2-SPTSSA complex shows a strong preference for C16-CoA substrate, while the SPTLC1-SPTLC3-SPTSSA isozyme uses both C14-CoA and C16-CoA as substrates, with a slight preference for C14-CoA. The SPTLC1-SPTLC2-SPTSSB complex shows a strong preference for C18-CoA substrate, while the SPTLC1-SPTLC3-SPTSSB isozyme displays an ability to use a broader range of acyl-CoAs, without apparent preference. Required for adipocyte cell viability and metabolic homeostasis. This Mus musculus (Mouse) protein is Serine palmitoyltransferase 1 (Sptlc1).